The primary structure comprises 252 residues: Small ribosomal subunit protein uS3 (252 aa).

The region spanning 39–109 (IRNYVNTRLK…EVKIDVVEVV (71 aa)) is the KH type-2 domain. Basic and acidic residues predominate over residues 222–240 (MKKIRDRRNDQRSRGGRDS). A disordered region spans residues 222 to 252 (MKKIRDRRNDQRSRGGRDSRNKRRRRPKNTA). Basic residues predominate over residues 241–252 (RNKRRRRPKNTA).

This sequence belongs to the universal ribosomal protein uS3 family. As to quaternary structure, part of the 30S ribosomal subunit. Forms a tight complex with proteins S10 and S14.

In terms of biological role, binds the lower part of the 30S subunit head. Binds mRNA in the 70S ribosome, positioning it for translation. The polypeptide is Small ribosomal subunit protein uS3 (Chlorobium phaeobacteroides (strain BS1)).